Reading from the N-terminus, the 101-residue chain is Small ribosomal subunit protein uS14 (101 aa).

This sequence belongs to the universal ribosomal protein uS14 family. Part of the 30S ribosomal subunit. Contacts proteins S3 and S10.

In terms of biological role, binds 16S rRNA, required for the assembly of 30S particles and may also be responsible for determining the conformation of the 16S rRNA at the A site. The chain is Small ribosomal subunit protein uS14 from Pseudomonas syringae pv. syringae (strain B728a).